Reading from the N-terminus, the 130-residue chain is ESAT-6 secretion system extracellular protein C (130 aa).

This sequence belongs to the EsxC family.

The protein resides in the secreted. This chain is ESAT-6 secretion system extracellular protein C, found in Staphylococcus aureus (strain MSSA476).